The primary structure comprises 291 residues: Transcription initiation factor IIE subunit beta (291 aa).

At methionine 1 the chain carries N-acetylmethionine. Residues methionine 1–lysine 13 are compositionally biased toward basic and acidic residues. Positions methionine 1–asparagine 63 are disordered. Residues glycine 50–phenylalanine 62 show a composition bias toward polar residues. The residue at position 61 (serine 61) is a Phosphoserine. A DNA-binding region (TFIIE beta) is located at residues alanine 66–arginine 146. Lysine 74 carries the N6-acetyllysine modification. The disordered stretch occupies residues serine 243–threonine 272. A compositionally biased stretch (basic residues) spans glutamine 257 to lysine 271.

It belongs to the TFIIE beta subunit family. In terms of assembly, tetramer of two alpha and two beta chains. Interacts with FACT subunit SUPT16H. Interacts with ATF7IP. Interacts with SND1. Part of TBP-based Pol II pre-initiation complex (PIC), in which Pol II core assembles with general transcription factors and other specific initiation factors including GTF2E1, GTF2E2, GTF2F1, GTF2F2, TCEA1, ERCC2, ERCC3, GTF2H2, GTF2H3, GTF2H4, GTF2H5, GTF2A1, GTF2A2, GTF2B and TBP; this large multi-subunit PIC complex mediates DNA unwinding and targets Pol II core to the transcription start site where the first phosphodiester bond forms.

The protein resides in the nucleus. Recruits TFIIH to the initiation complex and stimulates the RNA polymerase II C-terminal domain kinase and DNA-dependent ATPase activities of TFIIH. Both TFIIH and TFIIE are required for promoter clearance by RNA polymerase. The protein is Transcription initiation factor IIE subunit beta (GTF2E2) of Homo sapiens (Human).